A 414-amino-acid chain; its full sequence is GLABROUS1 enhancer-binding protein-like 3 (414 aa).

Disordered stretches follow at residues 36–57 (QLRTTTTRTTTTRTTPLSLSSS) and 167–191 (QAKDVPSGEPETNDVPCEEQDDRDV). The segment covering 38–50 (RTTTTRTTTTRTT) has biased composition (low complexity). The segment at 382-403 (LINEWKALFVDEQRLCVKKLTF) is non-canonical leucine-zipper.

This sequence belongs to the GeBP family. As to quaternary structure, homo- and heterodimers. Interacts with GEBP, GPL1 and GPL2. Interacts with GEBP. As to expression, expressed in the apical meristem and young leaf primordia. Detected in the vascular tissues of rosette leaves, in primary and secondary roots and at the base of flowers and siliques.

It is found in the nucleus. In terms of biological role, probable transcription factor. Involved in stress responses. Plays a repressive role in cell expansion by counteracting the positive role of CPR5 in this process, but does not regulate cell proliferation or endoreduplication. The chain is GLABROUS1 enhancer-binding protein-like 3 from Arabidopsis thaliana (Mouse-ear cress).